We begin with the raw amino-acid sequence, 414 residues long: Esterase FrsA (414 aa).

This sequence belongs to the FrsA family.

It carries out the reaction a carboxylic ester + H2O = an alcohol + a carboxylate + H(+). Its function is as follows. Catalyzes the hydrolysis of esters. The chain is Esterase FrsA from Salmonella typhi.